A 414-amino-acid polypeptide reads, in one-letter code: Putative L-lactate dehydrogenase (414 aa).

Residues 29 to 406 (RRLGAALTIQ…SPRHVTQLRR (378 aa)) form the FMN hydroxy acid dehydrogenase domain. Tyr55 contacts a 2-oxocarboxylate. FMN contacts are provided by Ser137 and Gln159. Residue Tyr161 coordinates a 2-oxocarboxylate. Thr187 provides a ligand contact to FMN. Arg196 contacts a 2-oxocarboxylate. Lys277 is a binding site for FMN. The Proton acceptor role is filled by His301. Arg304 is a binding site for a 2-oxocarboxylate. Residues 332–336 (DTGIM) and 355–356 (GR) each bind FMN.

Belongs to the FMN-dependent alpha-hydroxy acid dehydrogenase family. Requires FMN as cofactor.

The catalysed reaction is (S)-lactate + A = pyruvate + AH2. The polypeptide is Putative L-lactate dehydrogenase (lldD) (Mycobacterium tuberculosis (strain ATCC 25618 / H37Rv)).